The sequence spans 242 residues: MAPK-interacting and spindle-stabilizing protein-like (242 aa).

Disordered stretches follow at residues 1–145 (MSDE…SLGP) and 192–242 (PPGA…HSYH). Serine 2 carries the N-acetylserine modification. A phosphoserine mark is found at serine 2, serine 6, and serine 15. Positions 13–29 (EQSSAKPPAVTNTKAGH) are enriched in polar residues. Residues 30–43 (SSQGWPGSSPWSNP) show a composition bias toward low complexity. Composition is skewed to pro residues over residues 44-53 (SAPPAMPSGL) and 75-114 (SMPP…PGPT). Residues 192-210 (PPGAWGPAAPYPGPAGSYP) are compositionally biased toward low complexity.

Belongs to the MISS family.

This Mus musculus (Mouse) protein is MAPK-interacting and spindle-stabilizing protein-like (Mapk1ip1l).